The primary structure comprises 142 residues: U1 small nuclear ribonucleoprotein C (142 aa).

A Matrin-type zinc finger spans residues Tyr4–Met36.

It belongs to the U1 small nuclear ribonucleoprotein C family. In terms of assembly, U1 snRNP is composed of the 7 core Sm proteins B/B', D1, D2, D3, E, F and G that assemble in a heptameric protein ring on the Sm site of the small nuclear RNA to form the core snRNP, and at least 3 U1 snRNP-specific proteins U1-70K, U1-A and U1-C. U1-C interacts with U1 snRNA and the 5' splice-site region of the pre-mRNA.

Its subcellular location is the nucleus. In terms of biological role, component of the spliceosomal U1 snRNP, which is essential for recognition of the pre-mRNA 5' splice-site and the subsequent assembly of the spliceosome. U1-C is directly involved in initial 5' splice-site recognition for both constitutive and regulated alternative splicing. The interaction with the 5' splice-site seems to precede base-pairing between the pre-mRNA and the U1 snRNA. Stimulates commitment or early (E) complex formation by stabilizing the base pairing of the 5' end of the U1 snRNA and the 5' splice-site region. In Caenorhabditis elegans, this protein is U1 small nuclear ribonucleoprotein C.